The sequence spans 686 residues: Gamma-aminobutyric acid receptor alpha-like (686 aa).

Positions 1–58 are cleaved as a signal peptide; it reads MCTMPATRDASGSGDASTDLIAARSLSSHQGQRSNLRIFKLLISCCLLMLCIYPNAWP. Residues 97–393 are Extracellular-facing; it reads SSWLTQSNNH…NFHLQRHMGN (297 aa). An N-linked (GlcNAc...) asparagine glycan is attached at asparagine 108. The cysteines at positions 233 and 247 are disulfide-linked. An N-linked (GlcNAc...) asparagine glycan is attached at asparagine 292. A run of 3 helical transmembrane segments spans residues 394-414, 424-441, and 456-476; these read FLIQ…VSFW, VSLG…GLEA, and FFVF…AVVH. The Cytoplasmic segment spans residues 477–650; that stretch reads YYTKYGSGEC…YNSVSKIDRA (174 aa). The tract at residues 570 to 641 is disordered; that stretch reads KPPRADSDED…RRKGKRTPQY (72 aa). A compositionally biased stretch (polar residues) spans 586–596; the sequence is QLRANEAPTTS. Over residues 597 to 609 the composition is skewed to low complexity; it reads AAAAAAQAAAQAA. Residues 651–671 form a helical membrane-spanning segment; sequence SRIVFPLLFILINVFYWYGYL.

Belongs to the ligand-gated ion channel (TC 1.A.9) family. Gamma-aminobutyric acid receptor (TC 1.A.9.5) subfamily. As to quaternary structure, generally pentameric. There are five types of GABA(A) receptor chains: alpha, beta, gamma, delta, and rho. Interacts with Lcch3 (beta chain).

Its subcellular location is the postsynaptic cell membrane. It is found in the cell membrane. In terms of biological role, GABA, an inhibitory neurotransmitter, mediates neuronal inhibition by binding to the GABA receptor and opening an integral chloride channel. May combine with the ligand-gated ion channel subunit Lcch3 to form cation-selective GABA-gated ion channels. The chain is Gamma-aminobutyric acid receptor alpha-like (Grd) from Drosophila melanogaster (Fruit fly).